Here is a 59-residue protein sequence, read N- to C-terminus: Dybowskin-1CDYa (59 aa).

Positions 1–22 are cleaved as a signal peptide; sequence MFTLKKSLLLLFFLGTINFSLC. Positions 23 to 44 are excised as a propeptide; it reads EEERNAEEERRDYPEERDVEVE.

This sequence belongs to the frog skin active peptide (FSAP) family. Brevinin subfamily. As to expression, expressed by the skin glands.

The protein localises to the secreted. Its function is as follows. Antimicrobial peptide. Has activity against the Gram-positive bacterium S.aureus (MIC=6 uM) and the Gram-negative bacterium E.coli (MIC=3 uM). Lacks hemolytic activity against human erythrocytes. This chain is Dybowskin-1CDYa, found in Rana dybowskii (Dybovsky's frog).